A 208-amino-acid chain; its full sequence is A-type ATP synthase subunit E (208 aa).

The segment at 37 to 57 (DAEKTAEAEKNKILDNGKKQS) is disordered.

The protein belongs to the V-ATPase E subunit family. Has multiple subunits with at least A(3), B(3), C, D, E, F, H, I and proteolipid K(x).

Its subcellular location is the cell membrane. Functionally, component of the A-type ATP synthase that produces ATP from ADP in the presence of a proton gradient across the membrane. This is A-type ATP synthase subunit E from Methanobrevibacter smithii (strain ATCC 35061 / DSM 861 / OCM 144 / PS).